The sequence spans 150 residues: Transcriptional regulator MraZ (150 aa).

2 consecutive SpoVT-AbrB domains span residues Thr11 to Glu53 and Ala82 to Thr125.

The protein belongs to the MraZ family. Forms oligomers.

The protein localises to the cytoplasm. The protein resides in the nucleoid. In Bifidobacterium longum (strain NCC 2705), this protein is Transcriptional regulator MraZ.